The following is a 607-amino-acid chain: Polypeptide N-acetylgalactosaminyltransferase 18 (607 aa).

Over 1 to 12 the chain is Cytoplasmic; that stretch reads MVCTRKTKTLVS. Residues 13–35 traverse the membrane as a helical; Signal-anchor for type II membrane protein segment; sequence TCVILSGMTNIICLLYVGWVTNY. Topologically, residues 36–607 are lumenal; it reads IASVYVRGQE…ITNVLRSLAS (572 aa). Disulfide bonds link Cys-144–Cys-377, Cys-368–Cys-447, Cys-482–Cys-498, Cys-530–Cys-543, and Cys-571–Cys-591. The N-linked (GlcNAc...) asparagine glycan is linked to Asn-146. Positions 153–267 are catalytic subdomain A; it reads LPEVSIVFIF…VGWAEPVLTR (115 aa). Asp-194 lines the substrate pocket. Asn-195 carries N-linked (GlcNAc...) asparagine glycosylation. Residues Asp-251 and His-253 each contribute to the Mn(2+) site. Residue Asn-320 is glycosylated (N-linked (GlcNAc...) asparagine). The catalytic subdomain B stretch occupies residues 324-385; the sequence is PIRSPALIGC…PCSRIAHIER (62 aa). Residue His-382 participates in Mn(2+) binding. 2 residues coordinate substrate: Arg-385 and Tyr-390. The Ricin B-type lectin domain occupies 469 to 599; that stretch reads AYGVLQNSLK…KCSGQHWSIT (131 aa).

This sequence belongs to the glycosyltransferase 2 family. GalNAc-T subfamily. It depends on Mn(2+) as a cofactor.

It localises to the golgi apparatus membrane. The catalysed reaction is L-seryl-[protein] + UDP-N-acetyl-alpha-D-galactosamine = a 3-O-[N-acetyl-alpha-D-galactosaminyl]-L-seryl-[protein] + UDP + H(+). It catalyses the reaction L-threonyl-[protein] + UDP-N-acetyl-alpha-D-galactosamine = a 3-O-[N-acetyl-alpha-D-galactosaminyl]-L-threonyl-[protein] + UDP + H(+). The protein operates within protein modification; protein glycosylation. In terms of biological role, catalyzes the initial reaction in O-linked oligosaccharide biosynthesis, the transfer of an N-acetyl-D-galactosamine (GalNAc) residue from UDP-GalNAc to a serine or threonine residue on the protein receptor. The protein is Polypeptide N-acetylgalactosaminyltransferase 18 (GALNT18) of Homo sapiens (Human).